The following is a 655-amino-acid chain: tRNA uridine 5-carboxymethylaminomethyl modification enzyme MnmG (655 aa).

13–18 contributes to the FAD binding site; it reads GGGHAG. 281–295 contacts NAD(+); that stretch reads GPRYCPSVEDKINRF.

It belongs to the MnmG family. As to quaternary structure, homodimer. Heterotetramer of two MnmE and two MnmG subunits. FAD is required as a cofactor.

Its subcellular location is the cytoplasm. Functionally, NAD-binding protein involved in the addition of a carboxymethylaminomethyl (cmnm) group at the wobble position (U34) of certain tRNAs, forming tRNA-cmnm(5)s(2)U34. The protein is tRNA uridine 5-carboxymethylaminomethyl modification enzyme MnmG of Paracidovorax citrulli (strain AAC00-1) (Acidovorax citrulli).